A 413-amino-acid chain; its full sequence is Putative competence-damage inducible protein (413 aa).

It belongs to the CinA family.

The protein is Putative competence-damage inducible protein of Alkaliphilus oremlandii (strain OhILAs) (Clostridium oremlandii (strain OhILAs)).